The primary structure comprises 99 residues: ATP synthase subunit c (99 aa).

A run of 2 helical transmembrane segments spans residues 23-43 and 78-98; these read GAGI…IGAL and MGIA…LIFV.

It belongs to the ATPase C chain family. As to quaternary structure, F-type ATPases have 2 components, F(1) - the catalytic core - and F(0) - the membrane proton channel. F(1) has five subunits: alpha(3), beta(3), gamma(1), delta(1), epsilon(1). F(0) has three main subunits: a(1), b(2) and c(10-14). The alpha and beta chains form an alternating ring which encloses part of the gamma chain. F(1) is attached to F(0) by a central stalk formed by the gamma and epsilon chains, while a peripheral stalk is formed by the delta and b chains.

The protein localises to the cell membrane. Functionally, f(1)F(0) ATP synthase produces ATP from ADP in the presence of a proton or sodium gradient. F-type ATPases consist of two structural domains, F(1) containing the extramembraneous catalytic core and F(0) containing the membrane proton channel, linked together by a central stalk and a peripheral stalk. During catalysis, ATP synthesis in the catalytic domain of F(1) is coupled via a rotary mechanism of the central stalk subunits to proton translocation. In terms of biological role, key component of the F(0) channel; it plays a direct role in translocation across the membrane. A homomeric c-ring of between 10-14 subunits forms the central stalk rotor element with the F(1) delta and epsilon subunits. The chain is ATP synthase subunit c from Mycoplasma mobile (strain ATCC 43663 / 163K / NCTC 11711) (Mesomycoplasma mobile).